Consider the following 332-residue polypeptide: DNA double-strand break repair nuclease NurA (332 aa).

Mn(2+) contacts are provided by Asp57 and Asp132.

Belongs to the NurA family. It depends on Mn(2+) as a cofactor.

Its function is as follows. Involved in DNA double-strand break (DSB) repair. Probably acts with HerA to stimulate resection of the 5' strand and produce the long 3' single-strand that is required for RadA loading. Exhibits both single-stranded endonuclease activity and 5'-3' exonuclease activity on single-stranded and double-stranded DNA. This chain is DNA double-strand break repair nuclease NurA, found in Sulfolobus acidocaldarius (strain ATCC 33909 / DSM 639 / JCM 8929 / NBRC 15157 / NCIMB 11770).